The primary structure comprises 634 residues: DNA-directed RNA polymerase subunit gamma (634 aa).

Zn(2+) contacts are provided by cysteine 74, cysteine 76, cysteine 89, and cysteine 92. The Mg(2+) site is built by aspartate 471, aspartate 473, and aspartate 475.

The protein belongs to the RNA polymerase beta' chain family. RpoC1 subfamily. In terms of assembly, in cyanobacteria the RNAP catalytic core is composed of 2 alpha, 1 beta, 1 beta', 1 gamma and 1 omega subunit. When a sigma factor is associated with the core the holoenzyme is formed, which can initiate transcription. The cofactor is Mg(2+). Zn(2+) is required as a cofactor.

The catalysed reaction is RNA(n) + a ribonucleoside 5'-triphosphate = RNA(n+1) + diphosphate. Functionally, DNA-dependent RNA polymerase catalyzes the transcription of DNA into RNA using the four ribonucleoside triphosphates as substrates. In Synechococcus sp. (strain CC9902), this protein is DNA-directed RNA polymerase subunit gamma.